Consider the following 512-residue polypeptide: 2,3-bisphosphoglycerate-independent phosphoglycerate mutase (512 aa).

Residues D11 and S61 each coordinate Mn(2+). The Phosphoserine intermediate role is filled by S61. Residues H122, 152-153, R184, R190, 259-262, and K332 contribute to the substrate site; these read RD and RADR. The Mn(2+) site is built by D399, H403, D440, H441, and H459.

This sequence belongs to the BPG-independent phosphoglycerate mutase family. Monomer. Mn(2+) is required as a cofactor.

It carries out the reaction (2R)-2-phosphoglycerate = (2R)-3-phosphoglycerate. It participates in carbohydrate degradation; glycolysis; pyruvate from D-glyceraldehyde 3-phosphate: step 3/5. Its function is as follows. Catalyzes the interconversion of 2-phosphoglycerate and 3-phosphoglycerate. In Francisella tularensis subsp. tularensis (strain WY96-3418), this protein is 2,3-bisphosphoglycerate-independent phosphoglycerate mutase.